Here is a 1171-residue protein sequence, read N- to C-terminus: ATP-dependent helicase/deoxyribonuclease subunit B (1171 aa).

Residues 1–390 (MSLRFVIGRA…HPLVECIRSA (390 aa)) form the UvrD-like helicase ATP-binding domain. An ATP-binding site is contributed by 8 to 15 (GRAGSGKS). One can recognise a UvrD-like helicase C-terminal domain in the interval 281-587 (MEQPRFHSPA…QFANIPPSLD (307 aa)). The [4Fe-4S] cluster site is built by cysteine 805, cysteine 1129, cysteine 1132, and cysteine 1138.

It belongs to the helicase family. AddB/RexB type 1 subfamily. As to quaternary structure, heterodimer of AddA and AddB. Mg(2+) is required as a cofactor. [4Fe-4S] cluster serves as cofactor.

Its function is as follows. The heterodimer acts as both an ATP-dependent DNA helicase and an ATP-dependent, dual-direction single-stranded exonuclease. Recognizes the chi site generating a DNA molecule suitable for the initiation of homologous recombination. The AddB subunit has 5' -&gt; 3' nuclease activity but not helicase activity. The sequence is that of ATP-dependent helicase/deoxyribonuclease subunit B from Bacillus cereus (strain B4264).